A 99-amino-acid polypeptide reads, in one-letter code: Fetal and adult testis-expressed transcript protein homolog (99 aa).

A helical transmembrane segment spans residues 79–98 (AALFTLLVSVCIANLWLWVH).

Interacts with BIK and RNF183. Interacts with IMMT/MIC60and EMD.

It localises to the mitochondrion. It is found in the mitochondrion outer membrane. The protein resides in the endoplasmic reticulum membrane. In terms of biological role, involved in the regulation of endoplasmic reticulum (ER)-mitochondria coupling. Negatively regulates the ER-mitochondria distance and Ca(2+) transfer from ER to mitochondria possibly implicating it in the regulation of apoptosis. May collaborate with RNF183 to restrain BIK protein levels thus regulating apoptotic signaling. This chain is Fetal and adult testis-expressed transcript protein homolog (Fate1), found in Mus musculus (Mouse).